A 648-amino-acid chain; its full sequence is Replication restart protein PriA (648 aa).

One can recognise a Helicase ATP-binding domain in the interval 131–297 (TILNESNKPT…KTHKYQLVTL (167 aa)). 144–151 (GVTGSGKT) is a binding site for ATP. Residues 240-243 (DEEH) carry the DEAH box motif. Residues cysteine 358, cysteine 361, cysteine 367, cysteine 370, cysteine 385, cysteine 388, cysteine 398, and cysteine 401 each contribute to the Zn(2+) site. In terms of domain architecture, Helicase C-terminal spans 375 to 548 (VLHKATKKLE…RFFTNELEIR (174 aa)).

This sequence belongs to the helicase family. PriA subfamily. As to quaternary structure, component of the replication restart primosome. Zn(2+) is required as a cofactor.

The catalysed reaction is Couples ATP hydrolysis with the unwinding of duplex DNA by translocating in the 3'-5' direction.. It carries out the reaction ATP + H2O = ADP + phosphate + H(+). In terms of biological role, initiates the restart of stalled replication forks, which reloads the replicative helicase on sites other than the origin of replication. Recognizes and binds to abandoned replication forks and remodels them to uncover a helicase loading site. Promotes assembly of the primosome at these replication forks. The sequence is that of Replication restart protein PriA from Rickettsia prowazekii (strain Madrid E).